The sequence spans 122 residues: UPF0382 membrane protein SE_0353 (122 aa).

The next 4 membrane-spanning stretches (helical) occupy residues 3–23 (VFIILGALNAMMAVGTGAFGA), 46–66 (MYHGLGLLVIGLISGTTSINV), 69–89 (AGWLLFFGIVFFSGSLYFLAL), and 98–118 (ITPIGGVLFIIGWLVLVIATL).

It belongs to the UPF0382 family.

The protein localises to the cell membrane. The sequence is that of UPF0382 membrane protein SE_0353 from Staphylococcus epidermidis (strain ATCC 12228 / FDA PCI 1200).